The sequence spans 232 residues: Large ribosomal subunit protein uL1 (232 aa).

It belongs to the universal ribosomal protein uL1 family. Part of the 50S ribosomal subunit.

Functionally, binds directly to 23S rRNA. The L1 stalk is quite mobile in the ribosome, and is involved in E site tRNA release. In terms of biological role, protein L1 is also a translational repressor protein, it controls the translation of the L11 operon by binding to its mRNA. In Chlamydia abortus (strain DSM 27085 / S26/3) (Chlamydophila abortus), this protein is Large ribosomal subunit protein uL1.